Reading from the N-terminus, the 145-residue chain is Cuticle protein 7 (145 aa).

In terms of domain architecture, Chitin-binding type R&amp;R spans 41-114 (PVNVATSYHA…VASNALPVGP (74 aa)).

This is Cuticle protein 7 from Blaberus craniifer (Death's head cockroach).